The sequence spans 173 residues: Alpha-crystallin A chain (173 aa).

Met1 carries the N-acetylmethionine modification. Residues 53–164 (NFLDSSNSGM…GDRSIPVTRD (112 aa)) enclose the sHSP domain. Positions 101, 103, and 108 each coordinate Zn(2+). Residues Cys132 and Cys143 are joined by a disulfide bond. The segment at 143-173 (CGPKSGGSESGRGDRSIPVTRDDKTNSTPSS) is disordered. The span at 153–167 (GRGDRSIPVTRDDKT) shows a compositional bias: basic and acidic residues.

The protein belongs to the small heat shock protein (HSP20) family. In terms of assembly, heteropolymer composed of three CRYAA and one CRYAB subunits. Inter-subunit bridging via zinc ions enhances stability, which is crucial as there is no protein turn over in the lens. Zinc coordination is achieved at least by His-101, Glu-103 and His-108. His-101 and Glu-103 come from the same molecule within the oligomer, while His-108 residue is provided by another molecule. Can also form homodimers and homotetramers (dimers of dimers) which serve as the building blocks of homooligomers. Part of a complex required for lens intermediate filament formation composed of BFSP1, BFSP2 and CRYAA.

It is found in the cytoplasm. The protein localises to the nucleus. Functionally, contributes to the transparency and refractive index of the lens. May act as a chaperone, preventing aggregation of various proteins under a wide range of stress conditions. This chain is Alpha-crystallin A chain (cryaa), found in Psalidodon fasciatus (Banded astyanax).